The following is a 3790-amino-acid chain: MSVIENVPVNTFRNYLNILNDSSSKDELKLKATQELSEHFEMIMQSPAYPSFLDNSLKIFMRILQDGEPQFIQENTMQHIRKLILEMIHRLPITESLRQHVKTIITMMLKILKTDNEENVLVCLRIIIELHKHFRPSFNSEIQLFLGFVKEIYTNLPNHLTSIFETSNDVWVTDLKDLNLEVLLSESYSVRTIHVEKALDSNSQQQIYNLLPRGILSLKVLQELPIIVVLMYQIYKNAVHQEVSEFIPLILTTINLQPTVTRRNSPQKEIYVEFMGAQIKTLSFLAYIVRIFQEVVIASSLSVTSGMLNLMKNCPKEAAHLRKELLIAARHIFATDLRQKFIPSIEQLFDEDLLIGKGVTLDSIRPLAYSTLADLAHHVRQSLNIDVLIKAVNLFSKNVHDESLAVGIQTMSCKLLLNLVDCLRHHSETEPQRSKALLSKLLKVFVKKFETIAKIQLPLIIQKCKGHAFSGALVNSSGNASLSHINAPDLKDDISNIQVSASGSQWIYSVNVAEFRSLVKTLVGGVKTITWGFFNSKFQLTDTKLANHEKIFGPEIVCSYIDLVYYAMEALDIYTINVNPNQQRTSGLISRSKEEKEVLEHFSGIFLMMHSQNFQEIFSTTINFLVERIYKNQSLQVIANSFLANPTTSPLFATVLVEYLLNKMEEMGSNLERSNLYLRLFKLVFGSVSLFPVENEQMLRPHLHKIVNRSMELALISEEPYNYFLLLRALFRSIGGGSHDLLYQEFLPLLPNLLEGLNRLQSGFHKQHMRDLFVELCLTVPVRLSSLLPYLPMLMDPLVSALNGSPTLISQGLRTLELCVDNLQPDFLYDHIQPVRAALMQALWKTLRNQDNAALVAFRVLGKFGGGNRKMMVEPQALSYIINDKPTISIVTYFQEYETPIDFPVDEAIKSAFRALGSNSTDQFYRRQSWEVIRCFLAAFISLDDEKHMLLKLFTHVDFVENKIMNWSTFQHKAGNETVRETHQTALIGMLVASATKDLRDSVCPVMAAVVRHYTMVAIAQQAGPFPQKGYQATHGIDPMILIDALASCMGHEEKELCKPGIACMGIILDTATNIMGNKDRACKLPIIQYLAEKMVSLCYDRPWYSKVGGCQAIQFLCKHMSLRALFQNLFNFLKAFMFVLMDLEGDVSNGAIEITKSYMKSMLEICLTPINECYKNIDLKDLQAKATYEVIHELVRHITSPNTIVREESMVLLKHIGTIQSKTVSEVMDPHKDVLADIIPPKKHLLRHQPANAQIGLMDGNTFCTTLEPRLFTIDLTNTYHKLFFHELLTLSEAEDATLAKLDCYKNVPNLIPLRTSALRALAACHYISDIGYKEKIINIIFKVMESDKSELQTTAFHCMKHFITGVTLEKEKVQSAMRPLLLKLGDHRNLSIPAIKRLSYFTQIFPQMFNEKLSEQILQHCSKIMEIFVSEYKSTSPNVNFFASSKGGEYEQKIVILIEMFFYISASVKYIEKLCQLVLKTEKNLMIEASSPYREALIKFLQRFPTETVDLFLTESLMIDPQWNRLFIYLLKHETGVSFRAVIKSSRYNNLIHYLNTHTEFPEALKYEIQHQAVLIIFTLMESDDQWIPTRQDIVDALKNCWQNYLSTLSSEDVLCDLWHLIGKILLHYFSNNTNDIELLFQLLRALCFRFIPDVYFLRDFLQHTVAQSFTVNWKRNAFFYFVENFNNSFLSEELKAKIITAVIIPCFAVSFDKGEGNKLIGAPPTPYQEDEKNIVSVFINKVFDPDKQYDDAVRIALLQLACLLVERASQHIHDGDANNKRQGNKLRRLMTFAWPCLLSKSSVDPTARYHGHLLLSHIIARLAIHKKIVLQVFHSLLKGHALEARSIVKQALDVLTPAMPLRMEDGNTMLTHWTKKIIVEEGHAMQQLFHILQLIIRHYKVYFPVRHQLVQHLINYMQRLGFPPTASIEHKKLAVDLAEVIIKWELHRIKDDRETKTDGTEEELIQESSVKRSGIDLVETRKKSFDIIRETTVQGVGSHTKPDDILRSIDKSYCDTVLNFLIRLACQVNDPQAPILSPGESLSRRCVMLLKMAMRPEIWPQPFDIKLNWLDKVLATVETPHHNLNNICTGIDFLTFLTTILSPDQLVSIIRPVQRGLSLCIIHQNTRIVRLMHMFLTRIMAIFPPDTQHKHEDLDLLYTAVSKMIAENLTSYEKSPQPNASSLFGTLMILKACTTNNASYIDRILVQFIRVLNHLTRDHINTIGGNTVISQSPDSNALPLELLVLSLELIKNRIFVMSVEIRKLFIGTILVSLIEKSTEVKIIKCIIKMLDEWIKTKEPNVMTQVPSIREKSALLVKLMQNVEKKFTDEIELNIQFLEIINFIYRDEILKQTELTNKLEGAFLNGLRFQNPNVRSKFFEILDSSMRRRLHDRLLYIICSQAWDTIGSHYWIKQCIELLILTANTMMQIQCSNEQFKIPSITSVIPVNSSETQENSFVSFLSSHSESFDIIQTVDDKDDVYDIDLNADRKEDCQQILPNRRVTLVELVYKQAEFLEANRNIRTDQMLVATSQLCHIDTQLAQSVWLSMFPRIWSIFTEDQRCNITKELIPFLSSGTNVNQKDCHPSTLNTFVESLTKCAPPIYIPPNLLAYLGKSHNLWHRAILVLEDMAVNQSMQSKDIDGGENQFSDLDVQQSNNIFDSLSKMYSSMHEEDLWAGLWLKFAHYPETNIAVSYEQMGFFEEAQGAYDLAMTKFKQDLSNGVVNTYVNSELLLWENHWMRCAKELNQWDILLDYAQTNKDKNMFLILESSWRVPDWNLMKIALAKTEQCYLKHYGFKINLYKGYLSILHQEERQTGNIERYVEIASSLCIREWRRLPNIVSHIHLPYLQASQQIMELHEASQIHQGLAQSRNNSLHDMKAIVKTWRNRLPIISDDLSHWSDIFTWRQHHYQIITQHLEQQSDQGSTMLGVHASAQAIISFGKIARKHNLTGVCQETLSRIYTIPSVPIVDCFQKIRQQVKCYLQMPSTSGKNEINEALEVIESTNLKYFTGEMNAEFYALKGLLLAQIGRSEEAGKSFSVAAQLHDGLTKAWAMWGDYMEQIFLKERKITLAVDALICYLQASRNQIESKTRKYIAKVLWFLSYDNNTKILISTLEKHVAGIPPSYWLPWIPQLLCCLEQFEGDVILNLLSQIGRLYPQAVYFPIRTLYLTLKIEQREKHKTAEQAVKSSCSNIDGTTLSFGRGASHGNIPSINPIKATPPMWRCSKVMQLQREVHPTILSSLEGIVDQMVWFRESWTEEVLRQLRQGLIKCYAIAFEKRDTVQHSTITPHTLHFVKKLGSTFGIGIENVPGSVTSSISNSAASESLARRAQVTFQDPVFQKMKEQFTNDFDFSKPGAMKLHNLISKLKTWIKVLETKVKKLPTSFLIEDKCRFLSNFSQKTAEVELPGELLIPLSSHYYVRIARFMPRVEIVQKNNTAARRLYIRGTNGKIYPYLVVLDSGLGDARREERVLQLKRMLNYYLEKQKETSRRFLNITVPRVVPISPQMRLAEDNPNSISLLKIFKKCCQSMQVDYDMPIVKYYDRLSEVQARGTPTTHTLLREIFSEIQWTMVPKTLLKHWALKTFLAATDFWHFRKMLTLQLALAFLCEHALNLTRLNADMMYLHQDSGLMNISYFKFDVNDDKCQLNQHRPVPFRLTPNVGEFITHFGITGPLSAAIVATARCFIQPNYKLSSILQTILRDEIIALQKKGFRECKLIEGSEDRYSDGNCMEHSVNIVNSAVDIIMTRFNKISYFDSIENKKISVLVQSATNIDNLCRMDPAWHPWL.

6 HEAT repeats span residues 98 to 136, 335 to 381, 740 to 778, 1185 to 1223, 1332 to 1370, and 1826 to 1864; these read RQHV…HFRP, TDLR…HVRQ, DLLY…ELCL, AKAT…IQSK, IGYK…GVTL, and AIHK…AMPL. One can recognise an FAT domain in the interval 2610–3173; the sequence is LLAYLGKSHN…YFPIRTLYLT (564 aa). Positions 3429-3753 constitute a PI3K/PI4K catalytic domain; sequence MPRVEIVQKN…AVDIIMTRFN (325 aa). The segment at 3435-3441 is G-loop; the sequence is VQKNNTA. The catalytic loop stretch occupies residues 3616–3624; it reads NLTRLNADM. Positions 3636–3661 are activation loop; that stretch reads ISYFKFDVNDDKCQLNQHRPVPFRLT. The FATC domain maps to 3758–3790; it reads FDSIENKKISVLVQSATNIDNLCRMDPAWHPWL.

The protein belongs to the PI3/PI4-kinase family. TRA1 subfamily. In terms of assembly, component of the Tip60 chromatin-remodeling complex which contains the catalytic subunit Tip60 and the subunits Domino, Tra1, Brd8, E(Pc), DMAP1, Pontin, Reptin, Ing3, Act87E, BAP55, Mrg15, MrgBP, Gas41 and YL-1. Probable component of some SAGA complex. Interacts with Spt3, Gcn5, Ada3 and Ada2b. As to expression, ubiquitous.

The protein localises to the nucleus. The protein resides in the cytoplasm. It localises to the chromosome. In terms of biological role, part of the Tip60 chromatin-remodeling complex which is involved in DNA repair. Upon induction of DNA double-strand breaks, this complex acetylates phosphorylated H2AV in nucleosomes and exchanges it with unmodified H2AV. During wing development, required for activity of Notch and its coactivator mam. Function in promoting mam function is likely to involve both the Tip60 and SAGA complexes. This Drosophila melanogaster (Fruit fly) protein is Transcription-associated protein 1 (Nipped-A).